Reading from the N-terminus, the 313-residue chain is tRNA dimethylallyltransferase (313 aa).

ATP is bound at residue 17–24; it reads GPTASGKT. 19-24 contributes to the substrate binding site; sequence TASGKT. Interaction with substrate tRNA regions lie at residues 42-45, 166-170, and 247-252; these read DSAL, QRLSR, and RCVGYR.

Belongs to the IPP transferase family. As to quaternary structure, monomer. The cofactor is Mg(2+).

The catalysed reaction is adenosine(37) in tRNA + dimethylallyl diphosphate = N(6)-dimethylallyladenosine(37) in tRNA + diphosphate. In terms of biological role, catalyzes the transfer of a dimethylallyl group onto the adenine at position 37 in tRNAs that read codons beginning with uridine, leading to the formation of N6-(dimethylallyl)adenosine (i(6)A). The protein is tRNA dimethylallyltransferase of Pectobacterium atrosepticum (strain SCRI 1043 / ATCC BAA-672) (Erwinia carotovora subsp. atroseptica).